A 269-amino-acid chain; its full sequence is Zinc import ATP-binding protein ZnuC (269 aa).

Residues 6–221 (VRLTQVGVSF…PAFVELFGQD (216 aa)) enclose the ABC transporter domain. An ATP-binding site is contributed by 38–45 (GPNGAGKT).

Belongs to the ABC transporter superfamily. Zinc importer (TC 3.A.1.15.5) family. As to quaternary structure, the complex is composed of two ATP-binding proteins (ZnuC), two transmembrane proteins (ZnuB) and a solute-binding protein (ZnuA).

Its subcellular location is the cell inner membrane. It catalyses the reaction Zn(2+)(out) + ATP(in) + H2O(in) = Zn(2+)(in) + ADP(in) + phosphate(in) + H(+)(in). Part of the ABC transporter complex ZnuABC involved in zinc import. Responsible for energy coupling to the transport system. This chain is Zinc import ATP-binding protein ZnuC, found in Pseudomonas aeruginosa (strain UCBPP-PA14).